An 870-amino-acid chain; its full sequence is Linoleate 9S-lipoxygenase 2 (870 aa).

The 127-residue stretch at 32–158 folds into the PLAT domain; sequence NDFGATVIDG…KYRYNRVFFS (127 aa). The region spanning 161–870 is the Lipoxygenase domain; the sequence is TSLPSKMPAA…ARGIPNSISI (710 aa). Positions 203–243 are disordered; the sequence is YNDLGEPDSGNPRPVLGGSPDRPYPRRGRTGRKPTKTDPTA. Residues 227–236 show a composition bias toward basic residues; that stretch reads PRRGRTGRKP. The Fe cation site is built by His-525, His-530, His-716, Asn-720, and Ile-870.

It belongs to the lipoxygenase family. In terms of assembly, monomer. Requires Fe cation as cofactor.

Its subcellular location is the cytoplasm. It catalyses the reaction (9Z,12Z)-octadecadienoate + O2 = (9S)-hydroperoxy-(10E,12Z)-octadecadienoate. The protein operates within lipid metabolism; oxylipin biosynthesis. In terms of biological role, plant lipoxygenase may be involved in a number of diverse aspects of plant physiology including growth and development, pest resistance, and senescence or responses to wounding. Catalyzes the hydroperoxidation of lipids containing a cis,cis-1,4-pentadiene structure. The protein is Linoleate 9S-lipoxygenase 2 (LOX1.1) of Oryza sativa subsp. japonica (Rice).